Here is a 197-residue protein sequence, read N- to C-terminus: Pinin homolog 1 (197 aa).

The interval 30 to 73 is disordered; sequence LDGKVNNEDSHMEIDQPEGSMEEDDHRQVKEKNTSENSVEQKRG. Composition is skewed to basic and acidic residues over residues 34–43 and 53–71; these read VNNEDSHMEI and DDHR…VEQK.

Belongs to the pinin family.

The protein localises to the nucleus. The protein resides in the cytoplasm. Functionally, transcriptional activator that may participate in the regulation of mRNA splicing. The protein is Pinin homolog 1 (pnn1) of Schizosaccharomyces pombe (strain 972 / ATCC 24843) (Fission yeast).